The sequence spans 277 residues: Diaminopimelate epimerase (277 aa).

Residues Asn11 and Asn62 each coordinate substrate. Cys71 (proton donor) is an active-site residue. Substrate is bound by residues 72 to 73, Asn160, Asn193, and 211 to 212; these read GN and ER. Cys220 serves as the catalytic Proton acceptor. 221–222 is a substrate binding site; sequence GT.

The protein belongs to the diaminopimelate epimerase family. As to quaternary structure, homodimer.

The protein localises to the cytoplasm. The catalysed reaction is (2S,6S)-2,6-diaminopimelate = meso-2,6-diaminopimelate. It functions in the pathway amino-acid biosynthesis; L-lysine biosynthesis via DAP pathway; DL-2,6-diaminopimelate from LL-2,6-diaminopimelate: step 1/1. Catalyzes the stereoinversion of LL-2,6-diaminopimelate (L,L-DAP) to meso-diaminopimelate (meso-DAP), a precursor of L-lysine. The chain is Diaminopimelate epimerase from Methanococcus maripaludis (strain C5 / ATCC BAA-1333).